Here is an 884-residue protein sequence, read N- to C-terminus: Alanine--tRNA ligase (884 aa).

Residues H562, H566, C676, and H680 each coordinate Zn(2+).

This sequence belongs to the class-II aminoacyl-tRNA synthetase family. Zn(2+) serves as cofactor.

The protein resides in the cytoplasm. It carries out the reaction tRNA(Ala) + L-alanine + ATP = L-alanyl-tRNA(Ala) + AMP + diphosphate. Its function is as follows. Catalyzes the attachment of alanine to tRNA(Ala) in a two-step reaction: alanine is first activated by ATP to form Ala-AMP and then transferred to the acceptor end of tRNA(Ala). Also edits incorrectly charged Ser-tRNA(Ala) and Gly-tRNA(Ala) via its editing domain. This is Alanine--tRNA ligase from Jannaschia sp. (strain CCS1).